Reading from the N-terminus, the 473-residue chain is Tubulin gamma chain (473 aa).

Residues threonine 33–glutamate 56 form a disordered region. A compositionally biased stretch (basic and acidic residues) spans serine 43–glutamate 56. Alanine 143–glycine 149 contributes to the GTP binding site.

It belongs to the tubulin family. Interacts with SPC72, SPC97 and SPC98.

Its subcellular location is the cytoplasm. It is found in the cytoskeleton. It localises to the microtubule organizing center. The protein localises to the spindle pole body. Its function is as follows. Tubulin is the major constituent of microtubules. The gamma chain is found at microtubule organizing centers (MTOC) such as the spindle poles or the centrosome, suggesting that it is involved in the minus-end nucleation of microtubule assembly. TUB4 is an important spindle pole body component that organizes both cytoplasmic and nuclear microtubule arrays. The chain is Tubulin gamma chain (TUB4) from Saccharomyces cerevisiae (strain ATCC 204508 / S288c) (Baker's yeast).